Here is a 943-residue protein sequence, read N- to C-terminus: Calcium-activated chloride channel regulator 2 (943 aa).

Residues Met-1 to Ala-31 form the signal peptide. Residues Gly-32–Leu-901 are Extracellular-facing. Residues Asn-54–Val-205 are metalloprotease domain. 2 N-linked (GlcNAc...) asparagine glycosylation sites follow: Asn-74 and Asn-150. His-164 is a binding site for Zn(2+). Glu-165 is an active-site residue. Zn(2+) is bound by residues His-168 and Asp-175. Asn-231 is a glycosylation site (N-linked (GlcNAc...) asparagine). A VWFA domain is found at Val-311–Ile-483. Residues Asn-522 and Asn-822 are each glycosylated (N-linked (GlcNAc...) asparagine). A helical membrane pass occupies residues Ile-902–Val-922. Residues Thr-923–Leu-943 are Cytoplasmic-facing.

This sequence belongs to the CLCR family. Post-translationally, the 141 kDa mature form is autoproteolytically cleaved by the metalloprotease domain, producing a 109 kDa form and a 35 kDa form. The cleavage is necessary for calcium-activated chloride channel (CaCC) activation activity. N-glycosylated. In terms of tissue distribution, expressed in cornea, skin, vagina, esophagus, and larynx (at protein level). Expressed in trachea and mammary gland. Weakly expressed in testis and kidney. Highly expressed in corneal epithelium, colon and trachea. Moderately expressed in brain, urogenital organs, bladder, uterus and prostate. Highly expressed in tissues containing stratified epithelium including cornea, esophagus, larynx, skin and vagina than those tissues which contain only epithelial monolayers. Expressed in normal breast epithelium but not in breast cancer. Highly expressed during epithelial stratification. Expressed in endothelial cells of lung. Expressed selectively in endothelia of small pulmonary arteries, arterioles, and subpleural and interlobular venules.

The protein resides in the cell membrane. Its subcellular location is the basal cell membrane. The protein localises to the cell junction. It is found in the secreted. Its function is as follows. Plays a role in modulating chloride current across the plasma membrane in a calcium-dependent manner, and cell adhesion. Involved in basal cell adhesion and/or stratification of squamous epithelia. May act as a tumor suppressor in breast and colorectal cancer. Plays a key role for cell adhesion in the beginning stages of lung metastasis via the binding to ITGB4. This chain is Calcium-activated chloride channel regulator 2 (CLCA2), found in Homo sapiens (Human).